Consider the following 199-residue polypeptide: dITP/XTP pyrophosphatase (199 aa).

7–12 (SANKGK) lines the substrate pocket. Positions 38 and 73 each coordinate Mg(2+). The active-site Proton acceptor is D73. Residues S74, 155-158 (FGYD), K178, and 183-184 (HR) each bind substrate.

Belongs to the HAM1 NTPase family. In terms of assembly, homodimer. The cofactor is Mg(2+).

The enzyme catalyses XTP + H2O = XMP + diphosphate + H(+). It carries out the reaction dITP + H2O = dIMP + diphosphate + H(+). It catalyses the reaction ITP + H2O = IMP + diphosphate + H(+). Pyrophosphatase that catalyzes the hydrolysis of nucleoside triphosphates to their monophosphate derivatives, with a high preference for the non-canonical purine nucleotides XTP (xanthosine triphosphate), dITP (deoxyinosine triphosphate) and ITP. Seems to function as a house-cleaning enzyme that removes non-canonical purine nucleotides from the nucleotide pool, thus preventing their incorporation into DNA/RNA and avoiding chromosomal lesions. The protein is dITP/XTP pyrophosphatase of Aliarcobacter butzleri (strain RM4018) (Arcobacter butzleri).